The primary structure comprises 128 residues: Fluoride-specific ion channel FluC (128 aa).

4 helical membrane-spanning segments follow: residues 4–24, 37–57, 63–83, and 99–119; these read LILAIIVGCGGFIGAALRYLI, PYGTLIVNIVGAIIIGFIMDI, LISGHTKLFLTTGMMGGLTTF, and ILMGCTNAALNLGLSLVGVII. The Na(+) site is built by G78 and T81.

The protein belongs to the fluoride channel Fluc/FEX (TC 1.A.43) family.

It localises to the cell membrane. It carries out the reaction fluoride(in) = fluoride(out). Its activity is regulated as follows. Na(+) is not transported, but it plays an essential structural role and its presence is essential for fluoride channel function. Its function is as follows. Fluoride-specific ion channel. Important for reducing fluoride concentration in the cell, thus reducing its toxicity. The protein is Fluoride-specific ion channel FluC of Clostridium novyi (strain NT).